The sequence spans 155 residues: SsrA-binding protein (155 aa).

Belongs to the SmpB family.

It is found in the cytoplasm. In terms of biological role, required for rescue of stalled ribosomes mediated by trans-translation. Binds to transfer-messenger RNA (tmRNA), required for stable association of tmRNA with ribosomes. tmRNA and SmpB together mimic tRNA shape, replacing the anticodon stem-loop with SmpB. tmRNA is encoded by the ssrA gene; the 2 termini fold to resemble tRNA(Ala) and it encodes a 'tag peptide', a short internal open reading frame. During trans-translation Ala-aminoacylated tmRNA acts like a tRNA, entering the A-site of stalled ribosomes, displacing the stalled mRNA. The ribosome then switches to translate the ORF on the tmRNA; the nascent peptide is terminated with the 'tag peptide' encoded by the tmRNA and targeted for degradation. The ribosome is freed to recommence translation, which seems to be the essential function of trans-translation. The protein is SsrA-binding protein of Geobacillus sp. (strain WCH70).